Consider the following 383-residue polypeptide: Putative type I specificity subunit S.MgeORF438P (383 aa).

The segment at 1–142 is TRD1; the sequence is MTPKLKLNNN…KELEIPFTSN (142 aa). The conserved region 1 stretch occupies residues 143–182; sequence KNEQHAIANTLSVFDERLENLASLIEINRKLRDEYAHKLF. Residues 143 to 182 are a coiled coil; that stretch reads KNEQHAIANTLSVFDERLENLASLIEINRKLRDEYAHKLF. Residues 183 to 330 form a TRD2 region; sequence SLDEAFLSHW…GEIKVPYVKS (148 aa). The tract at residues 331–370 is conserved region 2; the sequence is FQLQRKAGKIVFLLDQKLDQYKKELSSLTVIRDTLLKKLF. The stretch at 331–370 forms a coiled coil; the sequence is FQLQRKAGKIVFLLDQKLDQYKKELSSLTVIRDTLLKKLF.

Belongs to the type-I restriction system S methylase family.

Its function is as follows. The specificity (S) subunit of a type I restriction enzyme; this subunit dictates DNA sequence specificity. This bacterium does not encode the associated endonuclease or methylase subunits. In Mycoplasma genitalium (strain ATCC 33530 / DSM 19775 / NCTC 10195 / G37) (Mycoplasmoides genitalium), this protein is Putative type I specificity subunit S.MgeORF438P.